Reading from the N-terminus, the 429-residue chain is Probable M18 family aminopeptidase 2 (429 aa).

Residues His-82, His-156, and His-401 each coordinate Zn(2+).

It belongs to the peptidase M18 family. Requires Zn(2+) as cofactor.

This Azotobacter vinelandii (strain DJ / ATCC BAA-1303) protein is Probable M18 family aminopeptidase 2.